The following is a 361-amino-acid chain: 3-dehydroquinate synthase (361 aa).

Residues 70-75, 104-108, 128-129, Lys141, and Lys150 each bind NAD(+); these read DGEQHK, GVVGD, and TT. Residues Glu183, His246, and His263 each contribute to the Zn(2+) site.

Belongs to the sugar phosphate cyclases superfamily. Dehydroquinate synthase family. Co(2+) is required as a cofactor. It depends on Zn(2+) as a cofactor. Requires NAD(+) as cofactor.

The protein resides in the cytoplasm. It catalyses the reaction 7-phospho-2-dehydro-3-deoxy-D-arabino-heptonate = 3-dehydroquinate + phosphate. It participates in metabolic intermediate biosynthesis; chorismate biosynthesis; chorismate from D-erythrose 4-phosphate and phosphoenolpyruvate: step 2/7. Functionally, catalyzes the conversion of 3-deoxy-D-arabino-heptulosonate 7-phosphate (DAHP) to dehydroquinate (DHQ). The polypeptide is 3-dehydroquinate synthase (Teredinibacter turnerae (strain ATCC 39867 / T7901)).